Here is a 484-residue protein sequence, read N- to C-terminus: Keratin, type I cytoskeletal 14 (484 aa).

Residues 1-20 (MATCSRQFTSSSSMKGSCGI) are disordered. The head stretch occupies residues 1-120 (MATCSRQFTS…GIGDGLLVGS (120 aa)). The coil 1A stretch occupies residues 121-156 (EKVTMQNLNDRLATYLDKVRALEEANTELEVKIRDW). The IF rod domain maps to 121–432 (EKVTMQNLND…RLLEGEDAHL (312 aa)). Residues 157–174 (YQRQRPTEIKDYSPYFKT) are linker 1. Residues 175–266 (IEDLKSKILA…KNHEEEMASM (92 aa)) form a coil 1B region. Positions 267-289 (RGQVGGDVNVEMDAAPGVDLSRI) are linker 12. Positions 290–428 (LNEMRDQYEK…ATYRRLLEGE (139 aa)) are coil 2. The tail stretch occupies residues 429–484 (DAHLSSSQFSSSSQFSSGSQSSRDVTSTNRQIRTKVMDVHDGKVVSTHEQVLRTKN). The interaction with Type I keratins and keratin filaments stretch occupies residues 431–484 (HLSSSQFSSSSQFSSGSQSSRDVTSTNRQIRTKVMDVHDGKVVSTHEQVLRTKN). Over residues 435 to 450 (SQFSSSSQFSSGSQSS) the composition is skewed to low complexity. A disordered region spans residues 435-457 (SQFSSSSQFSSGSQSSRDVTSTN). A Phosphoserine modification is found at S447.

This sequence belongs to the intermediate filament family. As to quaternary structure, heterotetramer of two type I and two type II keratins. Forms a disulfide-linked heterodimer (via 2B domains) with KRT5 (via 2B domains). Forms a heterodimer with KRT1; the interaction is more abundant in the absence of KRT5. Interacts with PLEC isoform 1C, when in a heterodimer with KRT5. Interacts with TRADD and with keratin filaments. Associates with other type I keratins. Interacts with EPPK1. Interacts with KLHL24. Interacts with PKP1 (via N-terminus) and PKP2. A disulfide bond is formed between rather than within filaments and promotes the formation of a keratin filament cage around the nucleus. Post-translationally, ubiquitinated by the BCR(KLHL24) E3 ubiquitin ligase complex. Expressed in the corneal epithelium (at protein level). Expressed in the basal layer of the epidermis and the outer root sheath of hair follicles (at protein level). Expressed in the epithelial basal layer in the tail epidermis. Expressed in the parabasal cell row, basal cell layer, and suprabasal epithelial layer of the tongue.

It is found in the cytoplasm. The protein resides in the nucleus. Functionally, the nonhelical tail domain is involved in promoting KRT5-KRT14 filaments to self-organize into large bundles and enhances the mechanical properties involved in resilience of keratin intermediate filaments in vitro. This Mus musculus (Mouse) protein is Keratin, type I cytoskeletal 14 (Krt14).